A 200-amino-acid chain; its full sequence is Probable nicotinate-nucleotide adenylyltransferase (200 aa).

The protein belongs to the NadD family.

The enzyme catalyses nicotinate beta-D-ribonucleotide + ATP + H(+) = deamido-NAD(+) + diphosphate. It participates in cofactor biosynthesis; NAD(+) biosynthesis; deamido-NAD(+) from nicotinate D-ribonucleotide: step 1/1. Catalyzes the reversible adenylation of nicotinate mononucleotide (NaMN) to nicotinic acid adenine dinucleotide (NaAD). The sequence is that of Probable nicotinate-nucleotide adenylyltransferase from Clavibacter sepedonicus (Clavibacter michiganensis subsp. sepedonicus).